A 253-amino-acid polypeptide reads, in one-letter code: Chitooligosaccharide deacetylase (253 aa).

Mg(2+) is bound by residues His-61 and His-126.

The protein belongs to the YdjC deacetylase family. ChbG subfamily. In terms of assembly, homodimer. Mg(2+) is required as a cofactor.

It is found in the cytoplasm. The catalysed reaction is N,N'-diacetylchitobiose + H2O = N-acetyl-beta-D-glucosaminyl-(1-&gt;4)-D-glucosamine + acetate. It carries out the reaction diacetylchitobiose-6'-phosphate + H2O = N'-monoacetylchitobiose-6'-phosphate + acetate. The protein operates within glycan degradation; chitin degradation. Its function is as follows. Involved in the degradation of chitin. ChbG is essential for growth on the acetylated chitooligosaccharides chitobiose and chitotriose but is dispensable for growth on cellobiose and chitosan dimer, the deacetylated form of chitobiose. Deacetylation of chitobiose-6-P and chitotriose-6-P is necessary for both the activation of the chb promoter by the regulatory protein ChbR and the hydrolysis of phosphorylated beta-glucosides by the phospho-beta-glucosidase ChbF. Catalyzes the removal of only one acetyl group from chitobiose-6-P to yield monoacetylchitobiose-6-P, the inducer of ChbR and the substrate of ChbF. In Yersinia enterocolitica serotype O:8 / biotype 1B (strain NCTC 13174 / 8081), this protein is Chitooligosaccharide deacetylase.